The chain runs to 290 residues: Ribosomal RNA small subunit methyltransferase A (290 aa).

The S-adenosyl-L-methionine site is built by Asn-27, Leu-29, Gly-54, Glu-75, Asp-100, and Asn-125.

The protein belongs to the class I-like SAM-binding methyltransferase superfamily. rRNA adenine N(6)-methyltransferase family. RsmA subfamily.

It is found in the cytoplasm. It carries out the reaction adenosine(1518)/adenosine(1519) in 16S rRNA + 4 S-adenosyl-L-methionine = N(6)-dimethyladenosine(1518)/N(6)-dimethyladenosine(1519) in 16S rRNA + 4 S-adenosyl-L-homocysteine + 4 H(+). Specifically dimethylates two adjacent adenosines (A1518 and A1519) in the loop of a conserved hairpin near the 3'-end of 16S rRNA in the 30S particle. May play a critical role in biogenesis of 30S subunits. The chain is Ribosomal RNA small subunit methyltransferase A from Streptococcus gordonii (strain Challis / ATCC 35105 / BCRC 15272 / CH1 / DL1 / V288).